Here is a 762-residue protein sequence, read N- to C-terminus: 1-phosphatidylinositol 4,5-bisphosphate phosphodiesterase delta-4 (762 aa).

The PH domain occupies 16–124 (LLMQEGMPMR…WMRGLQLLVD (109 aa)). Residues 26–53 (KVRSKSWKKLRYFRLQNDGMTVWHARQA) form a substrate binding region. EF-hand domains are found at residues 134 to 169 (RLDQ…MNVE), 170 to 205 (MDQE…LTKR), and 206 to 237 (AEVQ…EQKE). Ca(2+) is bound by residues Asp147, Asn149, Asp151, Lys153, Glu158, Asp183, Ser185, Ser187, Thr189, and Glu194. Positions 213-243 (ESFSADGQKLTLLEFLDFLREEQKERDCTSE) match the GBA motif. Residues 290-435 (QDMTQPLNHY…LRRRILVKGK (146 aa)) form the PI-PLC X-box domain. The active site involves His305. The Ca(2+) site is built by Asn306, Glu335, and Asp337. Residue His350 is part of the active site. Glu384 provides a ligand contact to Ca(2+). Positions 433 and 435 each coordinate substrate. Acidic residues predominate over residues 443–471 (LEYEEEEAEPELEESELALESQFETEPEP). A disordered region spans residues 443-483 (LEYEEEEAEPELEESELALESQFETEPEPQEQNLQSKDKKK). At Ser457 the chain carries Phosphoserine. The PI-PLC Y-box domain occupies 493–609 (LSSLVIYLKS…GYVLKPDFLR (117 aa)). Positions 522 and 549 each coordinate substrate. Residues 609 to 736 (RDIQSSFHPE…QGYRHIHLLS (128 aa)) form the C2 domain. Residues Ile650, Asp652, Asn676, Asp705, Tyr706, and Asp707 each coordinate Ca(2+). A PDZ-binding motif is present at residues 731–734 (HIHL).

Interacts with GRIP1. Interacts (via GBA motif) with guanine nucleotide-binding protein G(i) alpha subunit GNAI3 (inactive GDP-bound form); low-affinity interaction. Ca(2+) is required as a cofactor.

The protein localises to the membrane. It localises to the nucleus. Its subcellular location is the cytoplasm. It is found in the endoplasmic reticulum. The catalysed reaction is a 1,2-diacyl-sn-glycero-3-phospho-(1D-myo-inositol-4,5-bisphosphate) + H2O = 1D-myo-inositol 1,4,5-trisphosphate + a 1,2-diacyl-sn-glycerol + H(+). It carries out the reaction a 1,2-diacyl-sn-glycero-3-phospho-(1D-myo-inositol) + H2O = 1D-myo-inositol 1-phosphate + a 1,2-diacyl-sn-glycerol + H(+). In terms of biological role, hydrolyzes the phosphatidylinositol 4,5-bisphosphate (PIP2) to generate 2 second messenger molecules diacylglycerol (DAG) and inositol 1,4,5-trisphosphate (IP3). DAG mediates the activation of protein kinase C (PKC), while IP3 releases Ca(2+) from intracellular stores. Required for acrosome reaction in sperm during fertilization, probably by acting as an important enzyme for intracellular Ca(2+) mobilization in the zona pellucida-induced acrosome reaction. May play a role in cell growth. Modulates the liver regeneration in cooperation with nuclear PKC. Overexpression up-regulates the Erk signaling pathway and proliferation. This chain is 1-phosphatidylinositol 4,5-bisphosphate phosphodiesterase delta-4 (PLCD4), found in Pongo abelii (Sumatran orangutan).